The chain runs to 247 residues: UDP-2,3-diacylglucosamine hydrolase (247 aa).

Mn(2+) is bound by residues aspartate 8, histidine 10, aspartate 41, asparagine 79, and histidine 114. Asparagine 79–arginine 80 is a substrate binding site. Positions 122, 160, 171, 174, and 202 each coordinate substrate. Mn(2+) is bound by residues histidine 202 and histidine 204.

Belongs to the LpxH family. The cofactor is Mn(2+).

The protein resides in the cell inner membrane. It carries out the reaction UDP-2-N,3-O-bis[(3R)-3-hydroxytetradecanoyl]-alpha-D-glucosamine + H2O = 2-N,3-O-bis[(3R)-3-hydroxytetradecanoyl]-alpha-D-glucosaminyl 1-phosphate + UMP + 2 H(+). It participates in glycolipid biosynthesis; lipid IV(A) biosynthesis; lipid IV(A) from (3R)-3-hydroxytetradecanoyl-[acyl-carrier-protein] and UDP-N-acetyl-alpha-D-glucosamine: step 4/6. Hydrolyzes the pyrophosphate bond of UDP-2,3-diacylglucosamine to yield 2,3-diacylglucosamine 1-phosphate (lipid X) and UMP by catalyzing the attack of water at the alpha-P atom. Involved in the biosynthesis of lipid A, a phosphorylated glycolipid that anchors the lipopolysaccharide to the outer membrane of the cell. This is UDP-2,3-diacylglucosamine hydrolase from Xanthomonas campestris pv. campestris (strain 8004).